The sequence spans 393 residues: CCA-adding enzyme (393 aa).

ATP contacts are provided by glycine 27 and arginine 30. Residues glycine 27 and arginine 30 each contribute to the CTP site. Residues aspartate 40 and aspartate 42 each coordinate Mg(2+). Arginine 111, aspartate 154, arginine 157, arginine 160, and arginine 163 together coordinate ATP. CTP-binding residues include arginine 111, aspartate 154, arginine 157, arginine 160, and arginine 163.

This sequence belongs to the tRNA nucleotidyltransferase/poly(A) polymerase family. Bacterial CCA-adding enzyme type 3 subfamily. As to quaternary structure, homodimer. Requires Mg(2+) as cofactor.

It catalyses the reaction a tRNA precursor + 2 CTP + ATP = a tRNA with a 3' CCA end + 3 diphosphate. The catalysed reaction is a tRNA with a 3' CCA end + 2 CTP + ATP = a tRNA with a 3' CCACCA end + 3 diphosphate. Its function is as follows. Catalyzes the addition and repair of the essential 3'-terminal CCA sequence in tRNAs without using a nucleic acid template. Adds these three nucleotides in the order of C, C, and A to the tRNA nucleotide-73, using CTP and ATP as substrates and producing inorganic pyrophosphate. tRNA 3'-terminal CCA addition is required both for tRNA processing and repair. Also involved in tRNA surveillance by mediating tandem CCA addition to generate a CCACCA at the 3' terminus of unstable tRNAs. While stable tRNAs receive only 3'-terminal CCA, unstable tRNAs are marked with CCACCA and rapidly degraded. This chain is CCA-adding enzyme, found in Listeria monocytogenes serotype 4b (strain CLIP80459).